The sequence spans 412 residues: Lipoyl synthase, mitochondrial (412 aa).

[4Fe-4S] cluster-binding residues include C127, C132, C138, C159, C163, C166, and S375. In terms of domain architecture, Radical SAM core spans 142-364 (SDDEGTATAT…EKEAMDMGFL (223 aa)).

Belongs to the radical SAM superfamily. Lipoyl synthase family. [4Fe-4S] cluster is required as a cofactor.

It is found in the mitochondrion. It carries out the reaction [[Fe-S] cluster scaffold protein carrying a second [4Fe-4S](2+) cluster] + N(6)-octanoyl-L-lysyl-[protein] + 2 oxidized [2Fe-2S]-[ferredoxin] + 2 S-adenosyl-L-methionine + 4 H(+) = [[Fe-S] cluster scaffold protein] + N(6)-[(R)-dihydrolipoyl]-L-lysyl-[protein] + 4 Fe(3+) + 2 hydrogen sulfide + 2 5'-deoxyadenosine + 2 L-methionine + 2 reduced [2Fe-2S]-[ferredoxin]. The protein operates within protein modification; protein lipoylation via endogenous pathway; protein N(6)-(lipoyl)lysine from octanoyl-[acyl-carrier-protein]: step 2/2. Catalyzes the radical-mediated insertion of two sulfur atoms into the C-6 and C-8 positions of the octanoyl moiety bound to the lipoyl domains of lipoate-dependent enzymes, thereby converting the octanoylated domains into lipoylated derivatives. This Leishmania infantum protein is Lipoyl synthase, mitochondrial.